A 67-amino-acid chain; its full sequence is Large ribosomal subunit protein bL35 (67 aa).

Positions 21–50 (KVMCGPGNKRHGLINRPQKMKRTNRGPQTM) are disordered. Over residues 28-44 (NKRHGLINRPQKMKRTN) the composition is skewed to basic residues.

Belongs to the bacterial ribosomal protein bL35 family.

The chain is Large ribosomal subunit protein bL35 from Gluconobacter oxydans (strain 621H) (Gluconobacter suboxydans).